We begin with the raw amino-acid sequence, 255 residues long: MTKVGIVGSTGRMGAHLIKNVLEEEGLELAALHVFDELTVDVPDEVLITNSMSEVLKACDVVIDFSAPVATQELCEEALKNPTALVIATTGFTAHQQNLLTEAAKEMPVLYSSNMSAGIALLKQLVEQVSATLKDFDIEIVEQHHRHKVDAPSGTALTLGEFAAKGRGLDLDDVRVSGRDGQIGARTKDEIAVMALRGGDIVGRHTVGFYNDGEFLELNHTATSRETFSKGAIRAAKWLVDQKNGLYSINDCLGI.

NAD(+) contacts are provided by residues glycine 8–methionine 13, alanine 88–threonine 90, and serine 112–methionine 115. Histidine 144 (proton donor/acceptor) is an active-site residue. (S)-2,3,4,5-tetrahydrodipicolinate is bound at residue histidine 145. Lysine 148 serves as the catalytic Proton donor. Glycine 154–threonine 155 provides a ligand contact to (S)-2,3,4,5-tetrahydrodipicolinate.

Belongs to the DapB family.

It is found in the cytoplasm. It carries out the reaction (S)-2,3,4,5-tetrahydrodipicolinate + NAD(+) + H2O = (2S,4S)-4-hydroxy-2,3,4,5-tetrahydrodipicolinate + NADH + H(+). The catalysed reaction is (S)-2,3,4,5-tetrahydrodipicolinate + NADP(+) + H2O = (2S,4S)-4-hydroxy-2,3,4,5-tetrahydrodipicolinate + NADPH + H(+). Its pathway is amino-acid biosynthesis; L-lysine biosynthesis via DAP pathway; (S)-tetrahydrodipicolinate from L-aspartate: step 4/4. Its function is as follows. Catalyzes the conversion of 4-hydroxy-tetrahydrodipicolinate (HTPA) to tetrahydrodipicolinate. The chain is 4-hydroxy-tetrahydrodipicolinate reductase from Sulfurovum sp. (strain NBC37-1).